The chain runs to 458 residues: Transcription termination factor Rho (458 aa).

The tract at residues 1–23 is disordered; sequence MNTTNKESTAELNNTESNNNYNN. The segment covering 10 to 23 has biased composition (low complexity); it reads AELNNTESNNNYNN. The Rho RNA-BD domain occupies 78 to 153; that stretch reads LIVGEGVLEV…LKVNRVNFED (76 aa). Residues 201–206, 213–218, and arginine 244 each bind ATP; these read GKGQRA and RTGKTV.

Belongs to the Rho family. In terms of assembly, homohexamer. The homohexamer assembles into an open ring structure.

Facilitates transcription termination by a mechanism that involves Rho binding to the nascent RNA, activation of Rho's RNA-dependent ATPase activity, and release of the mRNA from the DNA template. The polypeptide is Transcription termination factor Rho (Rickettsia conorii (strain ATCC VR-613 / Malish 7)).